Here is a 309-residue protein sequence, read N- to C-terminus: MNRLQVELPGLSLKNPIIPASGCFGFGREYAQFYDLNVLGSIMIKATTEQPRYGNPTPRVAETPGGMLNAIGLQNPGLEKVMGSELPWLEQFDLPIIANVAGSQVEDYVAVAKKISKAPNVHALELNISCPNVKTGGIAFGTNPEIAADLTKRVKEVSEVPVYVKLSPNVTNIVEIAKAIENAGADGLTMINTLLGMRLDLKTAKPILANRTGGLSGPAIKPVAIRMVHEVSQVVDIPIIGMGGIESAEDVIEFFYAGASAVAVGTANFVDPLVCPTIIEELPSLLDELGFGHISECQGRSWKQVCQSR.

FMN is bound by residues Ser-21 and 45-46 (KA). Residues Lys-45 and 69-73 (NAIGL) each bind substrate. FMN contacts are provided by Asn-99 and Asn-127. Asn-127 contributes to the substrate binding site. The active-site Nucleophile is Cys-130. 2 residues coordinate FMN: Lys-165 and Ile-191. 192–193 (NT) contributes to the substrate binding site. Residues Gly-217, 243-244 (GG), and 265-266 (GT) each bind FMN.

This sequence belongs to the dihydroorotate dehydrogenase family. Type 1 subfamily. In terms of assembly, heterotetramer of 2 PyrK and 2 PyrD type B subunits. Requires FMN as cofactor.

It is found in the cytoplasm. It carries out the reaction (S)-dihydroorotate + NAD(+) = orotate + NADH + H(+). It participates in pyrimidine metabolism; UMP biosynthesis via de novo pathway; orotate from (S)-dihydroorotate (NAD(+) route): step 1/1. Catalyzes the conversion of dihydroorotate to orotate with NAD(+) as electron acceptor. This Bacillus cytotoxicus (strain DSM 22905 / CIP 110041 / 391-98 / NVH 391-98) protein is Dihydroorotate dehydrogenase B (NAD(+)), catalytic subunit (pyrD).